The primary structure comprises 166 residues: Plastocyanin, chloroplastic (166 aa).

The transit peptide at 1–67 (MASLTSAAVT…GAVLASNALA (67 aa)) directs the protein to the chloroplast. Residues 68 to 166 (VEVLLGGSDG…AGMAGKITVN (99 aa)) enclose the Plastocyanin-like domain. Positions 104, 151, 154, and 159 each coordinate Cu cation.

It belongs to the plastocyanin family. Cu(2+) serves as cofactor.

The protein resides in the plastid. It is found in the chloroplast thylakoid membrane. Functionally, participates in electron transfer between P700 and the cytochrome b6-f complex in photosystem I. This is Plastocyanin, chloroplastic (PETE) from Fritillaria agrestis (Stinkbells).